The following is a 344-amino-acid chain: Phosphoribosylformylglycinamidine cyclo-ligase (344 aa).

It belongs to the AIR synthase family.

It is found in the cytoplasm. The enzyme catalyses 2-formamido-N(1)-(5-O-phospho-beta-D-ribosyl)acetamidine + ATP = 5-amino-1-(5-phospho-beta-D-ribosyl)imidazole + ADP + phosphate + H(+). The protein operates within purine metabolism; IMP biosynthesis via de novo pathway; 5-amino-1-(5-phospho-D-ribosyl)imidazole from N(2)-formyl-N(1)-(5-phospho-D-ribosyl)glycinamide: step 2/2. In Haemophilus influenzae (strain PittEE), this protein is Phosphoribosylformylglycinamidine cyclo-ligase.